Here is a 249-residue protein sequence, read N- to C-terminus: DNA repair protein RecO (249 aa).

This sequence belongs to the RecO family.

In terms of biological role, involved in DNA repair and RecF pathway recombination. The chain is DNA repair protein RecO from Polaromonas sp. (strain JS666 / ATCC BAA-500).